The sequence spans 183 residues: 3-hydroxydecanoyl-[acyl-carrier-protein] dehydratase (183 aa).

His-77 is an active-site residue.

Belongs to the thioester dehydratase family. FabA subfamily. Homodimer.

The protein resides in the cytoplasm. It catalyses the reaction a (3R)-hydroxyacyl-[ACP] = a (2E)-enoyl-[ACP] + H2O. The enzyme catalyses (3R)-hydroxydecanoyl-[ACP] = (2E)-decenoyl-[ACP] + H2O. It carries out the reaction (2E)-decenoyl-[ACP] = (3Z)-decenoyl-[ACP]. Its pathway is lipid metabolism; fatty acid biosynthesis. In terms of biological role, necessary for the introduction of cis unsaturation into fatty acids. Catalyzes the dehydration of (3R)-3-hydroxydecanoyl-ACP to E-(2)-decenoyl-ACP and then its isomerization to Z-(3)-decenoyl-ACP. Can catalyze the dehydratase reaction for beta-hydroxyacyl-ACPs with saturated chain lengths up to 16:0, being most active on intermediate chain length. This Hahella chejuensis (strain KCTC 2396) protein is 3-hydroxydecanoyl-[acyl-carrier-protein] dehydratase.